We begin with the raw amino-acid sequence, 316 residues long: uncharacterized protein (316 aa).

Residues 16–89 (ERLDKFLARA…IPINIIYEDE (74 aa)) enclose the S4 RNA-binding domain. The active site involves D140.

Belongs to the pseudouridine synthase RluA family.

It catalyses the reaction a uridine in RNA = a pseudouridine in RNA. This is an uncharacterized protein from Aquifex aeolicus (strain VF5).